Reading from the N-terminus, the 293-residue chain is Lysosomal amino acid transporter 1 homolog (293 aa).

Topologically, residues 1-37 (MVWRTLGASNFSTCPNGSVQWIWDVFGECAQDGWDEA) are lumenal. Residues Asn-10 and Asn-16 are each glycosylated (N-linked (GlcNAc...) asparagine). The PQ-loop 1 domain maps to 34–100 (WDEASVGLGL…LADQLPLQTY (67 aa)). A helical membrane pass occupies residues 38-58 (SVGLGLVSILCFAASTFPQYI). Residues 59–71 (KACKTGNMDQALS) are Cytoplasmic-facing. A helical membrane pass occupies residues 72-92 (LWFLLGWIGGDSCNLIGSFLA). Topologically, residues 93–96 (DQLP) are lumenal. A helical transmembrane segment spans residues 97-117 (LQTYTAVYYVLADLMMLTLYF). The Cytoplasmic portion of the chain corresponds to 118-127 (HYKFKKRPSP). The chain crosses the membrane as a helical span at residues 128-148 (LSAPINSVLLFILGTVCITPL). Over 149-182 (LSSTDPVAVPREGFRGRTLLSVEPGNKPFTKKEV) the chain is Lumenal. Residues 183 to 203 (IGFVIGSASSLLYLLSRLPQI) form a helical membrane-spanning segment. The region spanning 191-243 (SSLLYLLSRLPQIRTNFIRQSTQGISYSLFALVMLGNTLYGLSVLLKNPEVGQ) is the PQ-loop 2 domain. The Cytoplasmic portion of the chain corresponds to 204-214 (RTNFIRQSTQG). The helical transmembrane segment at 215–235 (ISYSLFALVMLGNTLYGLSVL) threads the bilayer. Residues 236 to 254 (LKNPEVGQSEGSYLLHHLP) are Lumenal-facing. A helical transmembrane segment spans residues 255 to 275 (WLVGSLGVLLLDTIISIQFLV). Topologically, residues 276-293 (YRSHETAAASEREPLLPS) are cytoplasmic. Residues 290–291 (LL) carry the Di-leucine motif motif.

The protein belongs to the laat-1 family. As to expression, ubiquitously expressed.

Its subcellular location is the lysosome membrane. In terms of biological role, amino acid transporter that specifically mediates the pH-dependent export of the cationic amino acids arginine, histidine and lysine from lysosomes. In Mus musculus (Mouse), this protein is Lysosomal amino acid transporter 1 homolog.